Here is a 347-residue protein sequence, read N- to C-terminus: MDLQTQLQELKTSTQAKLAEMRGEHSKELQELRVAVLGKKGSLTELLKGLKDLPSEERPTVGKMVNEVRDVLTEAFDEAAKVVEAAKIQAQLDSESLDVTLPGRQVNLGNRHILSQIAEEIEDIFLGMGFQIVDGFEVETDYYNFERMNLPKDHPARDMQDTFYITEEILLRTHTSPVQARTLDKHDFSKGPLKMISPGRVFRRDTDDATHSHQFHQIEGLVVGKNISMGDLKGTLEMIIQKMFGAERQIRLRPSYFPFTEPSVEVDVSCFKCGGKGCNVCKKTGWIEILGAGMVHPQVLEMSGVDSEEYSGFAFGLGQERIAMLRYGINDIRSFYQGDVRFSEQFK.

Glu-261 contacts Mg(2+).

Belongs to the class-II aminoacyl-tRNA synthetase family. Phe-tRNA synthetase alpha subunit type 1 subfamily. As to quaternary structure, tetramer of two alpha and two beta subunits. It depends on Mg(2+) as a cofactor.

It is found in the cytoplasm. It catalyses the reaction tRNA(Phe) + L-phenylalanine + ATP = L-phenylalanyl-tRNA(Phe) + AMP + diphosphate + H(+). This Streptococcus thermophilus (strain CNRZ 1066) protein is Phenylalanine--tRNA ligase alpha subunit.